Consider the following 563-residue polypeptide: Merozoite receptor PK66 (563 aa).

A signal peptide spans 1 to 13 (MNKIYYILFLSAQ). Residues 14-487 (CLVHMGKCER…DGKHKKKMLL (474 aa)) lie on the Extracellular side of the membrane. Residues N36, N107, N176, N189, N238, and N441 are each glycosylated (N-linked (GlcNAc...) asparagine). Residues 488 to 508 (IIIGVTGAVCVVAVASLFYFR) form a helical membrane-spanning segment. Residues 509 to 563 (KKAQDDKYDKMDQAEAYGKTANTRKDEMLDPEASFWGEDKRASHTTPVLMEKPYY) lie on the Cytoplasmic side of the membrane.

This sequence belongs to the apicomplexan parasites AMA1 family.

It localises to the membrane. Merozoite receptor PK66 is a surface antigen involved in parasite invasion of erythrocytes. The protein is Merozoite receptor PK66 (PK66) of Plasmodium knowlesi (strain nuri).